A 232-amino-acid chain; its full sequence is Izumo sperm-egg fusion protein 4 (232 aa).

Residues M1 to A15 form the signal peptide. 2 N-linked (GlcNAc...) asparagine glycosylation sites follow: N24 and N219.

It belongs to the Izumo family. In terms of tissue distribution, detected in sperm.

It localises to the secreted. The sequence is that of Izumo sperm-egg fusion protein 4 (IZUMO4) from Homo sapiens (Human).